A 417-amino-acid chain; its full sequence is 4-hydroxy-3-methylbut-2-en-1-yl diphosphate synthase (flavodoxin) (417 aa).

Cys-305, Cys-308, Cys-351, and Glu-358 together coordinate [4Fe-4S] cluster.

The protein belongs to the IspG family. [4Fe-4S] cluster serves as cofactor.

It carries out the reaction (2E)-4-hydroxy-3-methylbut-2-enyl diphosphate + oxidized [flavodoxin] + H2O + 2 H(+) = 2-C-methyl-D-erythritol 2,4-cyclic diphosphate + reduced [flavodoxin]. The protein operates within isoprenoid biosynthesis; isopentenyl diphosphate biosynthesis via DXP pathway; isopentenyl diphosphate from 1-deoxy-D-xylulose 5-phosphate: step 5/6. Converts 2C-methyl-D-erythritol 2,4-cyclodiphosphate (ME-2,4cPP) into 1-hydroxy-2-methyl-2-(E)-butenyl 4-diphosphate. This Nitrosomonas europaea (strain ATCC 19718 / CIP 103999 / KCTC 2705 / NBRC 14298) protein is 4-hydroxy-3-methylbut-2-en-1-yl diphosphate synthase (flavodoxin).